The following is a 432-amino-acid chain: Guanine/hypoxanthine permease PbuO (432 aa).

A run of 10 helical transmembrane segments spans residues isoleucine 15 to isoleucine 35, isoleucine 51 to isoleucine 71, glycine 92 to leucine 112, isoleucine 133 to alanine 153, leucine 174 to isoleucine 194, methionine 196 to methionine 216, phenylalanine 234 to isoleucine 254, alanine 340 to methionine 360, leucine 379 to isoleucine 399, and arginine 412 to leucine 432.

This sequence belongs to the nucleobase:cation symporter-2 (NCS2) (TC 2.A.40) family. Azg-like subfamily.

It is found in the cell membrane. In terms of biological role, involved in the uptake of the purine bases hypoxanthine and guanine. May work at purine concentrations higher than 100 uM. This chain is Guanine/hypoxanthine permease PbuO (pbuO), found in Bacillus subtilis (strain 168).